We begin with the raw amino-acid sequence, 337 residues long: Large ribosomal subunit protein uL3 (337 aa).

Positions 1–20 are disordered; that stretch reads MASIHRPKRGSLAFSPRKRA.

The protein belongs to the universal ribosomal protein uL3 family. Part of the 50S ribosomal subunit. Forms a cluster with proteins L14 and L24e.

One of the primary rRNA binding proteins, it binds directly near the 3'-end of the 23S rRNA, where it nucleates assembly of the 50S subunit. The chain is Large ribosomal subunit protein uL3 from Methanosarcina barkeri (strain Fusaro / DSM 804).